Reading from the N-terminus, the 254-residue chain is 5-oxoprolinase subunit A (254 aa).

This sequence belongs to the LamB/PxpA family. As to quaternary structure, forms a complex composed of PxpA, PxpB and PxpC.

It catalyses the reaction 5-oxo-L-proline + ATP + 2 H2O = L-glutamate + ADP + phosphate + H(+). Catalyzes the cleavage of 5-oxoproline to form L-glutamate coupled to the hydrolysis of ATP to ADP and inorganic phosphate. This is 5-oxoprolinase subunit A from Burkholderia vietnamiensis (strain G4 / LMG 22486) (Burkholderia cepacia (strain R1808)).